Here is a 1196-residue protein sequence, read N- to C-terminus: DNA-directed RNA polymerase subunit beta (1196 aa).

Residues Glu-1152 to Asp-1165 show a composition bias toward acidic residues. A disordered region spans residues Glu-1152–Glu-1196. Basic and acidic residues predominate over residues Asp-1187–Glu-1196.

Belongs to the RNA polymerase beta chain family. As to quaternary structure, the RNAP catalytic core consists of 2 alpha, 1 beta, 1 beta' and 1 omega subunit. When a sigma factor is associated with the core the holoenzyme is formed, which can initiate transcription.

The enzyme catalyses RNA(n) + a ribonucleoside 5'-triphosphate = RNA(n+1) + diphosphate. DNA-dependent RNA polymerase catalyzes the transcription of DNA into RNA using the four ribonucleoside triphosphates as substrates. This is DNA-directed RNA polymerase subunit beta from Bacillus velezensis (strain DSM 23117 / BGSC 10A6 / LMG 26770 / FZB42) (Bacillus amyloliquefaciens subsp. plantarum).